Consider the following 575-residue polypeptide: Mitochondrial 2-methylisocitrate lyase ICL2 (575 aa).

Cys238 is an active-site residue.

The protein belongs to the isocitrate lyase/PEP mutase superfamily. Isocitrate lyase family.

The protein resides in the mitochondrion matrix. It carries out the reaction (2S,3R)-3-hydroxybutane-1,2,3-tricarboxylate = pyruvate + succinate. It participates in organic acid metabolism; propanoate degradation. Catalyzes the formation of pyruvate and succinate from 2-methylisocitrate during the metabolism of endogenous propionyl-CoA. Does not act on isocitrate. The chain is Mitochondrial 2-methylisocitrate lyase ICL2 (ICL2) from Saccharomyces cerevisiae (strain ATCC 204508 / S288c) (Baker's yeast).